Consider the following 306-residue polypeptide: MMKKKPKCQIARTKPSVENVIPYNQFKKTQPRFNGNFSALNNEEYIILFGGGRDLILGSLTPCSSSHLSNQANPQDTSEYGTDLFILNSCIIIWFNGLGYGLEIPYSSVLYHASRRLPDGREGLQLEILLTLERDEVLDMLYQSLAPQACEFDGEEAHAFTVRSVELTIRPKYSIYDRHYNNEIETLFTFENFGVNRGDDLVNNCNEALAVCMDLHGEDVQDQDQEQYQDPSMAFEGAQDLNATYSGLGDTLHGPPVYQNDGLADDLDGDLVMDNVVSRGGPEASMSMEFYANQNLAGRKNSRDNE.

The protein belongs to the LOT5 family.

It localises to the cytoplasm. Its subcellular location is the nucleus. In Saccharomyces cerevisiae (strain ATCC 204508 / S288c) (Baker's yeast), this protein is Protein LOT5 (LOT5).